Reading from the N-terminus, the 273-residue chain is Mitochondrial distribution and morphology protein 12 (273 aa).

The 260-residue stretch at 1-260 folds into the SMP-LTD domain; sequence MSFDINWEQL…WPSWINFDFY (260 aa). The disordered stretch occupies residues 76–98; it reads MSAEEETEGSDDEGYGGDRVRNR. Acidic residues predominate over residues 78-90; it reads AEEETEGSDDEGY.

This sequence belongs to the MDM12 family. As to quaternary structure, component of the ER-mitochondria encounter structure (ERMES) or MDM complex, composed of MMM1, MDM10, MDM12 and MDM34. An MMM1 homodimer associates with one molecule of MDM12 on each side in a pairwise head-to-tail manner, and the SMP-LTD domains of MMM1 and MDM12 generate a continuous hydrophobic tunnel for phospholipid trafficking.

It is found in the mitochondrion outer membrane. Its subcellular location is the endoplasmic reticulum membrane. Its function is as follows. Component of the ERMES/MDM complex, which serves as a molecular tether to connect the endoplasmic reticulum (ER) and mitochondria. Components of this complex are involved in the control of mitochondrial shape and protein biogenesis, and function in nonvesicular lipid trafficking between the ER and mitochondria. MDM12 is required for the interaction of the ER-resident membrane protein MMM1 and the outer mitochondrial membrane-resident beta-barrel protein MDM10. The MDM12-MMM1 subcomplex functions in the major beta-barrel assembly pathway that is responsible for biogenesis of all mitochondrial outer membrane beta-barrel proteins, and acts in a late step after the SAM complex. The MDM10-MDM12-MMM1 subcomplex further acts in the TOM40-specific pathway after the action of the MDM12-MMM1 complex. Essential for establishing and maintaining the structure of mitochondria and maintenance of mtDNA nucleoids. The protein is Mitochondrial distribution and morphology protein 12 of Vanderwaltozyma polyspora (strain ATCC 22028 / DSM 70294 / BCRC 21397 / CBS 2163 / NBRC 10782 / NRRL Y-8283 / UCD 57-17) (Kluyveromyces polysporus).